Reading from the N-terminus, the 270-residue chain is Fructose-2,6-bisphosphatase TIGAR (270 aa).

Catalysis depends on H11, which acts as the Tele-phosphohistidine intermediate. At K50 the chain carries N6-acetyllysine. The active-site Proton donor/acceptor is the E89.

It belongs to the phosphoglycerate mutase family. In terms of assembly, interacts with HK2; the interaction increases hexokinase HK2 activity in a hypoxia- and HIF1A-dependent manner, resulting in the regulation of mitochondrial membrane potential, thus increasing NADPH production and decreasing intracellular ROS levels.

The protein localises to the cytoplasm. The protein resides in the nucleus. Its subcellular location is the mitochondrion. It carries out the reaction beta-D-fructose 2,6-bisphosphate + H2O = beta-D-fructose 6-phosphate + phosphate. In terms of biological role, fructose-bisphosphatase hydrolyzing fructose-2,6-bisphosphate as well as fructose-1,6-bisphosphate. Acts as a negative regulator of glycolysis by lowering intracellular levels of fructose-2,6-bisphosphate in a p53/TP53-dependent manner, resulting in the pentose phosphate pathway (PPP) activation and NADPH production. Contributes to the generation of reduced glutathione to cause a decrease in intracellular reactive oxygen species (ROS) content, correlating with its ability to protect cells from oxidative or metabolic stress-induced cell death. Plays a role in promoting protection against cell death during hypoxia by decreasing mitochondria ROS levels in a HK2-dependent manner through a mechanism that is independent of its fructose-bisphosphatase activity. In response to cardiac damage stress, mediates p53-induced inhibition of myocyte mitophagy through ROS levels reduction and the subsequent inactivation of BNIP3. Reduced mitophagy results in an enhanced apoptotic myocyte cell death, and exacerbates cardiac damage. Plays a role in adult intestinal regeneration; contributes to the growth, proliferation and survival of intestinal crypts following tissue ablation. Plays a neuroprotective role against ischemic brain damage by enhancing PPP flux and preserving mitochondria functions. Protects glioma cells from hypoxia- and ROS-induced cell death by inhibiting glycolysis and activating mitochondrial energy metabolism and oxygen consumption in a TKTL1-dependent and p53/TP53-independent manner. Plays a role in cancer cell survival by promoting DNA repair through activating PPP flux in a CDK5-ATM-dependent signaling pathway during hypoxia and/or genome stress-induced DNA damage responses. Involved in intestinal tumor progression. In Bos taurus (Bovine), this protein is Fructose-2,6-bisphosphatase TIGAR.